The primary structure comprises 487 residues: Cell wall protein TIR4 (487 aa).

Residues 1–22 (MAYSKITLLAALAAIAYAQTQA) form the signal peptide. A run of 11 repeats spans residues 137–148 (SSSVAPSSSEVV), 149–160 (SSSVAPSSSEVV), 161–172 (SSSVAPSSSEVV), 173–184 (SSSVASSSSEVA), 185–196 (SSSVAPSSSEVV), 197–208 (SSSVASSSSEVA), 209–220 (SSSVAPSSSEVV), 221–232 (SSSVAPSSSEVV), 233–244 (SSSVASSSSEVA), 245–256 (SSSVAPSSSEVV), and 257–268 (SSSVASSTSEAT). Positions 137–268 (SSSVAPSSSE…SVASSTSEAT (132 aa)) are 11 X 12 AA approximate tandem repeats, Ser-rich. The disordered stretch occupies residues 206–299 (EVASSSVAPS…SVSSSSAVSS (94 aa)). Asn-327, Asn-348, Asn-368, Asn-403, and Asn-404 each carry an N-linked (GlcNAc...) asparagine glycan. Asn-465 carries the GPI-anchor amidated asparagine lipid modification. Residues 466 to 487 (GAAKAVIGMGAGALAAVAAMLL) constitute a propeptide, removed in mature form.

The protein belongs to the SRP1/TIP1 family. The GPI-anchor is attached to the protein in the endoplasmic reticulum and serves to target the protein to the cell surface. There, the glucosamine-inositol phospholipid moiety is cleaved off and the GPI-modified mannoprotein is covalently attached via its lipidless GPI glycan remnant to the 1,6-beta-glucan of the outer cell wall layer.

Its subcellular location is the secreted. The protein localises to the cell wall. The protein resides in the membrane. In terms of biological role, component of the cell wall. Required for anaerobic growth. In Saccharomyces cerevisiae (strain ATCC 204508 / S288c) (Baker's yeast), this protein is Cell wall protein TIR4 (TIR4).